The following is a 66-amino-acid chain: Large ribosomal subunit protein bL35 (66 aa).

Positions 1–23 (MPKMKTHRASAKRFKRTANGGLK) are disordered.

It belongs to the bacterial ribosomal protein bL35 family.

This is Large ribosomal subunit protein bL35 from Lactobacillus helveticus (strain DPC 4571).